The primary structure comprises 553 residues: RNA exonuclease 1 (553 aa).

A Phosphoserine modification is found at serine 24. The stretch at 167–194 (MEKINKLKELQKKKKITINDLVLSEQQL) forms a coiled coil. The 149-residue stretch at 225–373 (IFALDCEMCL…EDARACLELT (149 aa)) folds into the Exonuclease domain. The stretch at 509–533 (WNNLSTELEFIQDKKERLDKRRERE) forms a coiled coil.

This sequence belongs to the REXO1/REXO3 family.

It is found in the nucleus. Functionally, 3' exoribonuclease required for 5S rRNA maturation and for the proper maturation of the 5' cistron of the tRNA-Arg3 dicistronic gene. Involved with REX2 in the maturation of the 5.8S rRNA, and with REX2 and REX3, in the 3' processing of the U5L snRNA. This is RNA exonuclease 1 (RNH70) from Saccharomyces cerevisiae (strain ATCC 204508 / S288c) (Baker's yeast).